A 290-amino-acid chain; its full sequence is MLARFPLYLRLVRMDKPIGSLLLLWPTLNALWIASDGHPRWPLLAIFVLGTLLMRSAGCAMNDYADRDFDRHVKRTADRPLTSGKIRAWEAVAIAVVLAFISFLLIQPLNTLTKELSVVALFVAGSYPFMKRFFAIPQAYLGIAFGFGIPMAFAAVQDTVPMLAWVMLIANIFWSVAYDTEYAMVDRDDDIKIGIRTSALTFGRFDVAAVMLCYAATLGIYVWIGVTLGFGLAYWAGWAAAVGCALYHYTLIKDRERMPCFAAFRHNNWLGGVLFAGIAAHYLLAGTAGN.

Helical transmembrane passes span 41 to 61, 89 to 109, 133 to 153, 158 to 178, 202 to 224, and 269 to 289; these read WPLLAIFVLGTLLMRSAGCAM, WEAVAIAVVLAFISFLLIQPL, FFAIPQAYLGIAFGFGIPMAF, DTVPMLAWVMLIANIFWSVAY, FGRFDVAAVMLCYAATLGIYVWI, and WLGGVLFAGIAAHYLLAGTAG.

Belongs to the UbiA prenyltransferase family. Requires Mg(2+) as cofactor.

The protein resides in the cell inner membrane. The catalysed reaction is all-trans-octaprenyl diphosphate + 4-hydroxybenzoate = 4-hydroxy-3-(all-trans-octaprenyl)benzoate + diphosphate. It functions in the pathway cofactor biosynthesis; ubiquinone biosynthesis. Catalyzes the prenylation of para-hydroxybenzoate (PHB) with an all-trans polyprenyl group. Mediates the second step in the final reaction sequence of ubiquinone-8 (UQ-8) biosynthesis, which is the condensation of the polyisoprenoid side chain with PHB, generating the first membrane-bound Q intermediate 3-octaprenyl-4-hydroxybenzoate. The protein is 4-hydroxybenzoate octaprenyltransferase of Burkholderia ambifaria (strain ATCC BAA-244 / DSM 16087 / CCUG 44356 / LMG 19182 / AMMD) (Burkholderia cepacia (strain AMMD)).